The sequence spans 356 residues: Histidinol-phosphate aminotransferase (356 aa).

An N6-(pyridoxal phosphate)lysine modification is found at K214.

It belongs to the class-II pyridoxal-phosphate-dependent aminotransferase family. Histidinol-phosphate aminotransferase subfamily. In terms of assembly, homodimer. Pyridoxal 5'-phosphate is required as a cofactor.

The catalysed reaction is L-histidinol phosphate + 2-oxoglutarate = 3-(imidazol-4-yl)-2-oxopropyl phosphate + L-glutamate. Its pathway is amino-acid biosynthesis; L-histidine biosynthesis; L-histidine from 5-phospho-alpha-D-ribose 1-diphosphate: step 7/9. The polypeptide is Histidinol-phosphate aminotransferase (Aromatoleum aromaticum (strain DSM 19018 / LMG 30748 / EbN1) (Azoarcus sp. (strain EbN1))).